Here is a 341-residue protein sequence, read N- to C-terminus: Pre-mRNA-processing protein 45 (341 aa).

3 disordered regions span residues 1–31, 181–226, and 302–341; these read MFSSLLPKPKYSSHEPTSRIKLKKVRAHEKS, NYQE…EDQA, and EQHEKENKLKELADIARSKKLNNKRPPNGDYDDVKKKTKY. Basic residues predominate over residues 192–201; sequence FKLRKNRHKN. The segment covering 302 to 318 has biased composition (basic and acidic residues); sequence EQHEKENKLKELADIAR.

This sequence belongs to the SNW family. In terms of assembly, associated with the spliceosome.

The protein resides in the nucleus. Functionally, involved in pre-mRNA splicing. The protein is Pre-mRNA-processing protein 45 (PRP45) of Debaryomyces hansenii (strain ATCC 36239 / CBS 767 / BCRC 21394 / JCM 1990 / NBRC 0083 / IGC 2968) (Yeast).